Consider the following 475-residue polypeptide: Gelsolin-like protein 1 (475 aa).

The tract at residues 1–131 (MGGTSLDPAL…GYRHVDDQFK (131 aa)) is actin binding, actin severing, Ca-sensitive. Residues 1-239 (MGGTSLDPAL…VRKVSKGKDD (239 aa)) are necessary for barbed end capping activity. The Gelsolin-like 1 repeat unit spans residues 27–105 (FVLEPVPEVD…IQNYESPLFL (79 aa)). An actin-actin interfilament contact point region spans residues 70–73 (DEIG). The required for synapse elimination during development stretch occupies residues 106-147 (SYFPDGIRYVSGGYESGYRHVDDQFKNWKPHLFHCKGKRNVR). Residues 133–227 (WKPHLFHCKG…STFWSYFGGV (95 aa)) form a required for phosphatidylinositol 4,5-bisphosphate binding and regulation region. Gelsolin-like repeat units follow at residues 148 to 208 (CTEV…KVHI), 275 to 341 (RKEQ…STQF), and 375 to 447 (EIAN…PPTF). Residues 240 to 475 (DDNYWKRLTE…VQNMRRLLFH (236 aa)) form an F- and G-actin binding, Ca-independent region. Residues 248–348 (TEQITLWKVS…TQFTQWFRDW (101 aa)) are inhibitory for phosphatidylinositol 4,5-bisphosphate binding activity.

Belongs to the villin/gelsolin family. In terms of assembly, monomer. Binds to actin monomers and filaments. Post-translationally, cleavage by caspase ced-3 activates its actin-severing function and is required for the elimination of presynaptic components during development.

It localises to the cytoplasm. Its subcellular location is the cytoskeleton. Functionally, calcium-regulated, actin-modulating protein that binds to the plus (or barbed) ends of actin monomers or filaments, preventing monomer exchange (end-blocking or capping). Binds actin but does not nucleate actin polymerization, albeit slows down elongation by blocking the barbed ends. By promoting actin depolymerization, required for the elimination of presynaptic components downstream of the egl-1, ced-4 and ced-3 apoptotic pathway during larval development. This Caenorhabditis elegans protein is Gelsolin-like protein 1.